The sequence spans 127 residues: Prefoldin subunit 6 (127 aa).

Position 2 is an N-acetylalanine (Ala-2). Lys-21 is subject to N6-acetyllysine. N6-acetyllysine; alternate is present on Lys-66. A Glycyl lysine isopeptide (Lys-Gly) (interchain with G-Cter in SUMO1); alternate cross-link involves residue Lys-66. Lys-66 is covalently cross-linked (Glycyl lysine isopeptide (Lys-Gly) (interchain with G-Cter in SUMO2); alternate).

It belongs to the prefoldin subunit beta family. Heterohexamer of two PFD-alpha type and four PFD-beta type subunits. Component of the PAQosome complex which is responsible for the biogenesis of several protein complexes and which consists of R2TP complex members RUVBL1, RUVBL2, RPAP3 and PIH1D1, URI complex members PFDN2, PFDN6, PDRG1, UXT and URI1 as well as ASDURF, POLR2E and DNAAF10/WDR92.

Functionally, binds specifically to cytosolic chaperonin (c-CPN) and transfers target proteins to it. Binds to nascent polypeptide chain and promotes folding in an environment in which there are many competing pathways for nonnative proteins. The sequence is that of Prefoldin subunit 6 (Pfdn6) from Mus musculus (Mouse).